The chain runs to 103 residues: Large ribosomal subunit protein bL21 (103 aa).

Belongs to the bacterial ribosomal protein bL21 family. Part of the 50S ribosomal subunit. Contacts protein L20.

This protein binds to 23S rRNA in the presence of protein L20. The polypeptide is Large ribosomal subunit protein bL21 (Azotobacter vinelandii (strain DJ / ATCC BAA-1303)).